A 693-amino-acid chain; its full sequence is Elongation factor G (693 aa).

The 275-residue stretch at 8–282 (KNTRNIGIMA…AAIEYLPSPL (275 aa)) folds into the tr-type G domain. GTP-binding positions include 17–24 (AHIDAGKT), 81–85 (DTPGH), and 135–138 (NKMD).

The protein belongs to the TRAFAC class translation factor GTPase superfamily. Classic translation factor GTPase family. EF-G/EF-2 subfamily.

The protein resides in the cytoplasm. In terms of biological role, catalyzes the GTP-dependent ribosomal translocation step during translation elongation. During this step, the ribosome changes from the pre-translocational (PRE) to the post-translocational (POST) state as the newly formed A-site-bound peptidyl-tRNA and P-site-bound deacylated tRNA move to the P and E sites, respectively. Catalyzes the coordinated movement of the two tRNA molecules, the mRNA and conformational changes in the ribosome. The protein is Elongation factor G of Macrococcus caseolyticus (strain JCSC5402) (Macrococcoides caseolyticum).